A 214-amino-acid chain; its full sequence is Small ribosomal subunit protein uS3c (214 aa).

Residues 39 to 111 (IRTYLNKLAK…QLTINIIEVE (73 aa)) form the KH type-2 domain.

The protein belongs to the universal ribosomal protein uS3 family. In terms of assembly, part of the 30S ribosomal subunit.

The protein resides in the plastid. It localises to the chloroplast. The sequence is that of Small ribosomal subunit protein uS3c (rps3) from Trieres chinensis (Marine centric diatom).